Reading from the N-terminus, the 482-residue chain is ATP synthase subunit beta (482 aa).

162-169 contributes to the ATP binding site; it reads GGAGVGKT.

Belongs to the ATPase alpha/beta chains family. As to quaternary structure, F-type ATPases have 2 components, CF(1) - the catalytic core - and CF(0) - the membrane proton channel. CF(1) has five subunits: alpha(3), beta(3), gamma(1), delta(1), epsilon(1). CF(0) has four main subunits: a(1), b(1), b'(1) and c(9-12).

It localises to the cellular thylakoid membrane. It carries out the reaction ATP + H2O + 4 H(+)(in) = ADP + phosphate + 5 H(+)(out). In terms of biological role, produces ATP from ADP in the presence of a proton gradient across the membrane. The catalytic sites are hosted primarily by the beta subunits. The polypeptide is ATP synthase subunit beta (Nostoc punctiforme (strain ATCC 29133 / PCC 73102)).